The primary structure comprises 62 residues: Large ribosomal subunit protein eL24 (62 aa).

Residues Cys-7, Cys-10, Cys-33, and Cys-37 each coordinate Zn(2+). The C4-type zinc-finger motif lies at 7–37 (CSFCGKDILPGTGLMYVRNDGSLLWFCSSKC).

This sequence belongs to the eukaryotic ribosomal protein eL24 family. In terms of assembly, part of the 50S ribosomal subunit. Forms a cluster with proteins L3 and L14. Zn(2+) serves as cofactor.

Its function is as follows. Binds to the 23S rRNA. This is Large ribosomal subunit protein eL24 from Sulfolobus acidocaldarius (strain ATCC 33909 / DSM 639 / JCM 8929 / NBRC 15157 / NCIMB 11770).